Reading from the N-terminus, the 154-residue chain is Myoglobin (154 aa).

The region spanning 2–148 (GLSDGEWQLV…FRKDMASNYK (147 aa)) is the Globin domain. S4 carries the phosphoserine modification. H65 provides a ligand contact to nitrite. H65 contacts O2. T68 is subject to Phosphothreonine. H94 lines the heme b pocket.

This sequence belongs to the globin family. Monomeric.

It localises to the cytoplasm. The protein localises to the sarcoplasm. The enzyme catalyses Fe(III)-heme b-[protein] + nitric oxide + H2O = Fe(II)-heme b-[protein] + nitrite + 2 H(+). The catalysed reaction is H2O2 + AH2 = A + 2 H2O. Its function is as follows. Monomeric heme protein which primary function is to store oxygen and facilitate its diffusion within muscle tissues. Reversibly binds oxygen through a pentacoordinated heme iron and enables its timely and efficient release as needed during periods of heightened demand. Depending on the oxidative conditions of tissues and cells, and in addition to its ability to bind oxygen, it also has a nitrite reductase activity whereby it regulates the production of bioactive nitric oxide. Under stress conditions, like hypoxia and anoxia, it also protects cells against reactive oxygen species thanks to its pseudoperoxidase activity. The polypeptide is Myoglobin (MB) (Pan troglodytes (Chimpanzee)).